A 333-amino-acid polypeptide reads, in one-letter code: GTPase Obg (333 aa).

The 158-residue stretch at 1 to 158 folds into the Obg domain; the sequence is MFIDSAKIYV…RNIDLELKLL (158 aa). Residues 121-143 form a disordered region; sequence HGGKGNQHFATPTNRAPRYSEPA. Residues 159–323 enclose the OBG-type G domain; the sequence is ADIGLVGFPN…LKDVLWRIIQ (165 aa). GTP is bound by residues 165–172, 190–194, 212–215, 279–282, and 304–306; these read GFPNAGKS, FTTLE, DIPG, SKMD, and SSV. Mg(2+)-binding residues include Ser-172 and Thr-192.

Belongs to the TRAFAC class OBG-HflX-like GTPase superfamily. OBG GTPase family. In terms of assembly, monomer. Requires Mg(2+) as cofactor.

The protein resides in the cytoplasm. Its function is as follows. An essential GTPase which binds GTP, GDP and possibly (p)ppGpp with moderate affinity, with high nucleotide exchange rates and a fairly low GTP hydrolysis rate. Plays a role in control of the cell cycle, stress response, ribosome biogenesis and in those bacteria that undergo differentiation, in morphogenesis control. This chain is GTPase Obg, found in Chloroherpeton thalassium (strain ATCC 35110 / GB-78).